Here is an 889-residue protein sequence, read N- to C-terminus: Putative receptor-like protein kinase At3g46340 (889 aa).

The first 25 residues, methionine 1–alanine 25, serve as a signal peptide directing secretion. At glutamate 26–methionine 514 the chain is on the extracellular side. Residues asparagine 185, asparagine 239, asparagine 259, asparagine 292, asparagine 316, asparagine 342, asparagine 366, asparagine 419, asparagine 435, asparagine 448, asparagine 467, and asparagine 474 are each glycosylated (N-linked (GlcNAc...) asparagine). LRR repeat units follow at residues arginine 414 to threonine 437, histidine 438 to methionine 460, and serine 462 to lysine 483. A helical transmembrane segment spans residues isoleucine 515–valine 535. Residues phenylalanine 536–arginine 889 are Cytoplasmic-facing. A disordered region spans residues leucine 544–threonine 566. Positions lysine 585 to phenylalanine 874 constitute a Protein kinase domain. Residues leucine 591 to valine 599 and lysine 614 each bind ATP. Phosphotyrosine is present on tyrosine 659. Aspartate 711 functions as the Proton acceptor in the catalytic mechanism. Serine 745 carries the post-translational modification Phosphoserine. Phosphothreonine occurs at positions 746 and 751. Tyrosine 759 is subject to Phosphotyrosine. Residues asparagine 863–arginine 889 form a disordered region. Polar residues predominate over residues lysine 864 to phenylalanine 880.

The protein belongs to the protein kinase superfamily. Ser/Thr protein kinase family.

It localises to the cell membrane. It carries out the reaction L-seryl-[protein] + ATP = O-phospho-L-seryl-[protein] + ADP + H(+). The enzyme catalyses L-threonyl-[protein] + ATP = O-phospho-L-threonyl-[protein] + ADP + H(+). In Arabidopsis thaliana (Mouse-ear cress), this protein is Putative receptor-like protein kinase At3g46340.